The chain runs to 194 residues: Orotate phosphoribosyltransferase (194 aa).

116-124 (EDIVTTGLS) contacts 5-phospho-alpha-D-ribose 1-diphosphate. Orotate contacts are provided by Thr-120 and Arg-148.

This sequence belongs to the purine/pyrimidine phosphoribosyltransferase family. PyrE subfamily. As to quaternary structure, homodimer. It depends on Mg(2+) as a cofactor.

The enzyme catalyses orotidine 5'-phosphate + diphosphate = orotate + 5-phospho-alpha-D-ribose 1-diphosphate. The protein operates within pyrimidine metabolism; UMP biosynthesis via de novo pathway; UMP from orotate: step 1/2. Its function is as follows. Catalyzes the transfer of a ribosyl phosphate group from 5-phosphoribose 1-diphosphate to orotate, leading to the formation of orotidine monophosphate (OMP). In Phenylobacterium zucineum (strain HLK1), this protein is Orotate phosphoribosyltransferase.